A 381-amino-acid polypeptide reads, in one-letter code: tRNA-specific 2-thiouridylase MnmA (381 aa).

ATP-binding positions include 26–33 and Leu52; that span reads AMSGGVDS. The active-site Nucleophile is Cys120. Cysteines 120 and 217 form a disulfide. Gly144 contributes to the ATP binding site. The segment at 166–168 is interaction with tRNA; that stretch reads RDQ. The active-site Cysteine persulfide intermediate is Cys217.

It belongs to the MnmA/TRMU family.

The protein resides in the cytoplasm. The catalysed reaction is S-sulfanyl-L-cysteinyl-[protein] + uridine(34) in tRNA + AH2 + ATP = 2-thiouridine(34) in tRNA + L-cysteinyl-[protein] + A + AMP + diphosphate + H(+). Catalyzes the 2-thiolation of uridine at the wobble position (U34) of tRNA, leading to the formation of s(2)U34. This chain is tRNA-specific 2-thiouridylase MnmA, found in Ruegeria sp. (strain TM1040) (Silicibacter sp.).